A 571-amino-acid chain; its full sequence is Peptide-N4-(N-acetyl-beta-glucosaminyl)asparagine amidase A (571 aa).

N-linked (GlcNAc...) asparagine glycans are attached at residues Asn-121, Asn-143, Asn-197, Asn-241, Asn-318, Asn-367, Asn-390, Asn-423, Asn-457, Asn-481, Asn-524, and Asn-529.

As to quaternary structure, heterodimer of a large and a small chain. In terms of processing, is highly glycosylated and is largly resistant against self-deglycosylation.

It carries out the reaction Hydrolysis of an N(4)-(acetyl-beta-D-glucosaminyl)asparagine residue in which the glucosamine residue may be further glycosylated, to yield a (substituted) N-acetyl-beta-D-glucosaminylamine and a peptide containing an aspartate residue.. The protein is Peptide-N4-(N-acetyl-beta-glucosaminyl)asparagine amidase A of Prunus dulcis (Almond).